A 41-amino-acid polypeptide reads, in one-letter code: Competence-stimulating peptide type 1 (41 aa).

Residues 1-24 (MKNTVKLEQFVALKEKDLQKIKGG) constitute a propeptide that is removed on maturation.

It belongs to the ComC family.

It localises to the secreted. Its function is as follows. Acts as a pheromone, induces cells to develop competence for genetic transformation. The polypeptide is Competence-stimulating peptide type 1 (comC1) (Streptococcus pneumoniae).